Consider the following 244-residue polypeptide: 1-(5-phosphoribosyl)-5-[(5-phosphoribosylamino)methylideneamino] imidazole-4-carboxamide isomerase (244 aa).

The active-site Proton acceptor is aspartate 10. Aspartate 132 serves as the catalytic Proton donor.

This sequence belongs to the HisA/HisF family.

Its subcellular location is the cytoplasm. The enzyme catalyses 1-(5-phospho-beta-D-ribosyl)-5-[(5-phospho-beta-D-ribosylamino)methylideneamino]imidazole-4-carboxamide = 5-[(5-phospho-1-deoxy-D-ribulos-1-ylimino)methylamino]-1-(5-phospho-beta-D-ribosyl)imidazole-4-carboxamide. Its pathway is amino-acid biosynthesis; L-histidine biosynthesis; L-histidine from 5-phospho-alpha-D-ribose 1-diphosphate: step 4/9. The polypeptide is 1-(5-phosphoribosyl)-5-[(5-phosphoribosylamino)methylideneamino] imidazole-4-carboxamide isomerase (Stenotrophomonas maltophilia (strain R551-3)).